The following is a 156-amino-acid chain: Small ribosomal subunit protein uS7 (156 aa).

Belongs to the universal ribosomal protein uS7 family. In terms of assembly, part of the 30S ribosomal subunit. Contacts proteins S9 and S11.

In terms of biological role, one of the primary rRNA binding proteins, it binds directly to 16S rRNA where it nucleates assembly of the head domain of the 30S subunit. Is located at the subunit interface close to the decoding center, probably blocks exit of the E-site tRNA. This Desulforamulus reducens (strain ATCC BAA-1160 / DSM 100696 / MI-1) (Desulfotomaculum reducens) protein is Small ribosomal subunit protein uS7.